Reading from the N-terminus, the 861-residue chain is Homeobox-leucine zipper protein HOX29 (861 aa).

Positions 2–65 (DASKYVRYTP…NRRCREKQRK (64 aa)) form a DNA-binding region, homeobox. Residues 57 to 99 (RRCREKQRKESSRLQALNRKLTAMNKLLMEENDRLQKQVSQLV) are a coiled coil. The 229-residue stretch at 162 to 390 (RDASPAGLMS…VAHEDTRSVI (229 aa)) folds into the START domain.

Belongs to the HD-ZIP homeobox family. Class III subfamily. Expressed in roots, stems and leaf blades.

Its subcellular location is the nucleus. Probable transcription factor. This chain is Homeobox-leucine zipper protein HOX29 (HOX29), found in Oryza sativa subsp. indica (Rice).